The following is a 1088-amino-acid chain: DNA damage-binding protein 1a (1088 aa).

It belongs to the DDB1 family. As to quaternary structure, component of the CDD complex, at least composed of COP10, DET1 and DDB1A. Component of the CUL4-RBX1-CDD complex. Component of the CUL4-RBX1-DDB1-PRL1 E3 ubiquitin-protein ligase complex. Component of the UV-DDB complex, which is composed of DDB1A and DDB2. Interacts with RAE1. Interacts with WDR55. Interacts with ATCSA-1. Interacts with DDA1. Binds to ASG2; the subcellular localization of this complex depends on ASG2 farnesylation status. Binds to KTN80.2/DWA3. Interacts with HTD1. Interacts directly with DHU1.

It is found in the cytoplasm. Its subcellular location is the nucleus. Its pathway is protein modification; protein ubiquitination. Functionally, component of light signal transduction machinery. Involved in repression of photomorphogenesis in darkness by participating in the CDD complex, a complex probably required to regulate the activity of ubiquitin conjugating enzymes (E2s). Repression of photomorphogenesis is probably mediated by ubiquitination and subsequent degradation of photomorphogenesis-promoting factors such as HY5, HYH and LAF1. Plays a role in DNA repair by forming with DDB2 the UV-damaged DNA-binding protein complex (UV-DDB). Component of the CUL4-RBX1-DDB1-PRL1 E3 ubiquitin-protein ligase complex. This is DNA damage-binding protein 1a from Arabidopsis thaliana (Mouse-ear cress).